A 572-amino-acid chain; its full sequence is Probable pyruvate decarboxylase C186.09 (572 aa).

Substrate contacts are provided by Asp38 and His125. Residues 400–482 form a thiamine pyrophosphate binding region; sequence DSWFGGMRIT…FLINNRGYTI (83 aa). Mg(2+)-binding residues include Asp450, Asn477, and Gly479. Position 483 (Glu483) interacts with substrate.

The protein belongs to the TPP enzyme family. In terms of assembly, homotetramer. A metal cation serves as cofactor. Requires thiamine diphosphate as cofactor.

The enzyme catalyses a 2-oxocarboxylate + H(+) = an aldehyde + CO2. This chain is Probable pyruvate decarboxylase C186.09, found in Schizosaccharomyces pombe (strain 972 / ATCC 24843) (Fission yeast).